A 131-amino-acid chain; its full sequence is UPF0102 protein CYA_0708 (131 aa).

Belongs to the UPF0102 family.

The protein is UPF0102 protein CYA_0708 of Synechococcus sp. (strain JA-3-3Ab) (Cyanobacteria bacterium Yellowstone A-Prime).